The following is a 176-amino-acid chain: ATP-dependent protease subunit HslV (176 aa).

Thr-5 is an active-site residue. The Na(+) site is built by Ser-161, Cys-164, and Thr-167.

This sequence belongs to the peptidase T1B family. HslV subfamily. In terms of assembly, a double ring-shaped homohexamer of HslV is capped on each side by a ring-shaped HslU homohexamer. The assembly of the HslU/HslV complex is dependent on binding of ATP.

Its subcellular location is the cytoplasm. The catalysed reaction is ATP-dependent cleavage of peptide bonds with broad specificity.. Allosterically activated by HslU binding. Its function is as follows. Protease subunit of a proteasome-like degradation complex believed to be a general protein degrading machinery. The protein is ATP-dependent protease subunit HslV of Caldanaerobacter subterraneus subsp. tengcongensis (strain DSM 15242 / JCM 11007 / NBRC 100824 / MB4) (Thermoanaerobacter tengcongensis).